Here is a 215-residue protein sequence, read N- to C-terminus: Thymidylate kinase (215 aa).

Residue 7-14 coordinates ATP; it reads GMEGSGKS.

This sequence belongs to the thymidylate kinase family.

The catalysed reaction is dTMP + ATP = dTDP + ADP. Phosphorylation of dTMP to form dTDP in both de novo and salvage pathways of dTTP synthesis. The chain is Thymidylate kinase from Nitratidesulfovibrio vulgaris (strain DSM 19637 / Miyazaki F) (Desulfovibrio vulgaris).